The sequence spans 747 residues: Kinesin-like protein KIF3B (747 aa).

At M1 the chain carries N-acetylmethionine. S2 bears the N-acetylserine; in Kinesin-like protein KIF3B, N-terminally processed mark. In terms of domain architecture, Kinesin motor spans 9–340 (SVRVVVRCRP…LRYANRAKNI (332 aa)). 96-103 (GQTGTGKT) is a binding site for ATP. The stretch at 346–579 (VNEDPKDALL…EQTQNELTRE (234 aa)) forms a coiled coil. 2 disordered regions span residues 374-412 (IGRRKRREKRREGGGSGGGGEEEEEEGEEGEEEGDDKDD) and 699-747 (QVDA…LVPK). Residues 393–411 (GEEEEEEGEEGEEEGDDKD) show a composition bias toward acidic residues. The globular stretch occupies residues 580–747 (LKLKHLIIEN…YPQSRGLVPK (168 aa)). Positions 701 to 710 (DASSFESTAN) are enriched in polar residues. Positions 711 to 721 (KKSKARPKSGR) are enriched in basic residues. The span at 722–735 (KSGSSSSSSGTPAS) shows a compositional bias: low complexity.

It belongs to the TRAFAC class myosin-kinesin ATPase superfamily. Kinesin family. Kinesin II subfamily. In terms of assembly, heterodimer of KIF3A and KIF3B. KIF3A/KIF3B heterodimer interacts with KIFAP3 forming a heterotrimeric (KIF3A/KIF3B/KIFAP3) complex. Interacts directly with IFT20. Interacts with the SMC3 subunit of the cohesin complex. Interacts with FLCN.

The protein localises to the cytoplasm. It is found in the cytoskeleton. The protein resides in the cell projection. It localises to the cilium. Its subcellular location is the dendritic spine. In terms of biological role, microtubule-based molecular motor that transport intracellular cargos, such as vesicles, organelles and protein complexes. Uses ATP hydrolysis to generate force to bind and move along the microtubule. Plays a role in cilia formation. Involved in photoreceptor integrity and opsin trafficking in rod photoreceptors. Transports vesicles containing N-methyl-D-aspartate (NMDA) receptor subunit GRIN2A into neuronal dendrites. In Homo sapiens (Human), this protein is Kinesin-like protein KIF3B (KIF3B).